Consider the following 235-residue polypeptide: MLTLLAILTVSYIIGSIPTSIMAGKMMKGIDIRNFGSGNAGGTNAFRVLGWKTGLTVTLIDIVKGVVAAVSVVAFFRHHPIGAFPDINEVALRLLAGMSAVIGHVFTVFAGFKGGKGVSTAAGMLIGIAPVSMLMVIGIFLLTVWFSRYVSVASIFAAVAFPLIIAIRKYVFELGGGLDYYIRLFGESFSFHDSLDYHLIIFGLLVAFAILFTHRANIRRLISGTENRVTFRKHA.

A run of 6 helical transmembrane segments spans residues 4–24 (LLAILTVSYIIGSIPTSIMAG), 56–76 (TVTLIDIVKGVVAAVSVVAFF), 94–114 (LLAGMSAVIGHVFTVFAGFKG), 126–146 (IGIAPVSMLMVIGIFLLTVWF), 152–172 (VASIFAAVAFPLIIAIRKYVF), and 194–214 (SLDYHLIIFGLLVAFAILFTH).

It belongs to the PlsY family. Probably interacts with PlsX.

It localises to the cell inner membrane. The catalysed reaction is an acyl phosphate + sn-glycerol 3-phosphate = a 1-acyl-sn-glycero-3-phosphate + phosphate. Its pathway is lipid metabolism; phospholipid metabolism. In terms of biological role, catalyzes the transfer of an acyl group from acyl-phosphate (acyl-PO(4)) to glycerol-3-phosphate (G3P) to form lysophosphatidic acid (LPA). This enzyme utilizes acyl-phosphate as fatty acyl donor, but not acyl-CoA or acyl-ACP. This Chlorobium phaeovibrioides (strain DSM 265 / 1930) (Prosthecochloris vibrioformis (strain DSM 265)) protein is Glycerol-3-phosphate acyltransferase.